Reading from the N-terminus, the 220-residue chain is Probable chemoreceptor glutamine deamidase CheD 2 (220 aa).

This sequence belongs to the CheD family.

The enzyme catalyses L-glutaminyl-[protein] + H2O = L-glutamyl-[protein] + NH4(+). In terms of biological role, probably deamidates glutamine residues to glutamate on methyl-accepting chemotaxis receptors (MCPs), playing an important role in chemotaxis. In Methanosarcina acetivorans (strain ATCC 35395 / DSM 2834 / JCM 12185 / C2A), this protein is Probable chemoreceptor glutamine deamidase CheD 2.